The primary structure comprises 143 residues: Probable cyclic pyranopterin monophosphate synthase (143 aa).

Substrate contacts are provided by residues 61-63 (MCH) and 97-98 (ME). D112 is an active-site residue.

This sequence belongs to the MoaC family. As to quaternary structure, homohexamer; trimer of dimers.

The enzyme catalyses (8S)-3',8-cyclo-7,8-dihydroguanosine 5'-triphosphate = cyclic pyranopterin phosphate + diphosphate. It participates in cofactor biosynthesis; molybdopterin biosynthesis. Catalyzes the conversion of (8S)-3',8-cyclo-7,8-dihydroguanosine 5'-triphosphate to cyclic pyranopterin monophosphate (cPMP). This Sulfolobus acidocaldarius (strain ATCC 33909 / DSM 639 / JCM 8929 / NBRC 15157 / NCIMB 11770) protein is Probable cyclic pyranopterin monophosphate synthase.